The primary structure comprises 118 residues: Fluoride-specific ion channel FluC 1 (118 aa).

4 helical membrane passes run 5 to 25, 34 to 54, 56 to 76, and 98 to 118; these read FVLV…ISVL, FPFA…FLVS, ALGP…YTTF, and YLGC…MLGV. Residues Gly71 and Thr74 each coordinate Na(+).

Belongs to the fluoride channel Fluc/FEX (TC 1.A.43) family.

Its subcellular location is the cell membrane. The enzyme catalyses fluoride(in) = fluoride(out). Na(+) is not transported, but it plays an essential structural role and its presence is essential for fluoride channel function. Its function is as follows. Fluoride-specific ion channel. Important for reducing fluoride concentration in the cell, thus reducing its toxicity. The protein is Fluoride-specific ion channel FluC 1 of Listeria monocytogenes serotype 4b (strain F2365).